The sequence spans 400 residues: Enoyl-[acyl-carrier-protein] reductase [NADH] (400 aa).

NAD(+) contacts are provided by residues 48–53 (GASTGY), 74–75 (FE), 111–112 (DA), and 139–140 (LA). Tyrosine 225 is a binding site for substrate. Tyrosine 235 serves as the catalytic Proton donor. NAD(+) is bound by residues lysine 244 and 273–275 (VVT).

Belongs to the TER reductase family. In terms of assembly, monomer.

The enzyme catalyses a 2,3-saturated acyl-[ACP] + NAD(+) = a (2E)-enoyl-[ACP] + NADH + H(+). It functions in the pathway lipid metabolism; fatty acid biosynthesis. Involved in the final reduction of the elongation cycle of fatty acid synthesis (FAS II). Catalyzes the reduction of a carbon-carbon double bond in an enoyl moiety that is covalently linked to an acyl carrier protein (ACP). The sequence is that of Enoyl-[acyl-carrier-protein] reductase [NADH] from Burkholderia ambifaria (strain ATCC BAA-244 / DSM 16087 / CCUG 44356 / LMG 19182 / AMMD) (Burkholderia cepacia (strain AMMD)).